The primary structure comprises 245 residues: MPFDPLFLWETFIALLAGIPLALKLAVFSIAVGTVLAFSLALMRVSRRWWLDFPARFYIFAFRGTPLLVQIYIIYYGLSQFPGLRHSLLWPFLREAYWCALGALALNTAAYSAEIMRGGLLSVPAGQIEAARACGMARVLLFRRIIIPQAIRQMLPGYSNEVVLMVKSTSLASTITLMEITGIAAKLISETYRPVEVFACAGAIYLTMNFIAARLFALIEWSLWPERRKTRRPVDLADQKGELHV.

A run of 5 helical transmembrane segments spans residues 12–32 (FIAL…SIAV), 57–77 (FYIF…IYYG), 96–116 (AYWC…AEIM), 163–183 (VLMV…ITGI), and 199–219 (ACAG…FALI). The ABC transmembrane type-1 domain maps to 19-216 (IPLALKLAVF…TMNFIAARLF (198 aa)).

It belongs to the binding-protein-dependent transport system permease family. HisMQ subfamily.

The protein localises to the cell inner membrane. In terms of biological role, component of the octopine active transport system probably consisting of four subunits: Q, M, P and T. This chain is Octopine transport system permease protein OccM (occM), found in Rhizobium meliloti (Ensifer meliloti).